The chain runs to 161 residues: Nucleotide-binding protein Rmet_2899 (161 aa).

It belongs to the YajQ family.

Functionally, nucleotide-binding protein. The polypeptide is Nucleotide-binding protein Rmet_2899 (Cupriavidus metallidurans (strain ATCC 43123 / DSM 2839 / NBRC 102507 / CH34) (Ralstonia metallidurans)).